We begin with the raw amino-acid sequence, 387 residues long: MLRFLTAGESHGPALTAIVEGMVAGLPVTHEYINTQLARRQGGYGRGGRMKIEKDEVQFLSGIRGGYTTGSPITLQIANRDWQNWCHIMASGPDALLDERVVTRPRPGHADLPGAIKYDHSDIRNILERSSARETAARVAVGSMARCLLEELDIKLVGFVCSIGSIKASVAENLSIEDLVARTQSSQLFCPDEQAEEAMVKEIDQAKETGDSLGGVFEVRVYGVPVGLGSHVQWDRKLDSRLAGAMMGIQAIKGVEIGLGFGAAAVPGSQVHDEIYYAAQRGFYRGSNRAGGIEGGITNGEPLILRAAMKPIPTLYKPLRSVDIKNKEPYLASVERSDVCAVPAACVVGEAVVAWELAVALMEKFGGDSLGEIKARLNQWQQWVRQV.

Positions 40 and 46 each coordinate NADP(+). Residues 129–131, 250–251, glycine 295, 310–314, and arginine 336 contribute to the FMN site; these read RSS, QA, and KPIPT.

Belongs to the chorismate synthase family. In terms of assembly, homotetramer. FMNH2 is required as a cofactor.

It catalyses the reaction 5-O-(1-carboxyvinyl)-3-phosphoshikimate = chorismate + phosphate. It participates in metabolic intermediate biosynthesis; chorismate biosynthesis; chorismate from D-erythrose 4-phosphate and phosphoenolpyruvate: step 7/7. Its function is as follows. Catalyzes the anti-1,4-elimination of the C-3 phosphate and the C-6 proR hydrogen from 5-enolpyruvylshikimate-3-phosphate (EPSP) to yield chorismate, which is the branch point compound that serves as the starting substrate for the three terminal pathways of aromatic amino acid biosynthesis. This reaction introduces a second double bond into the aromatic ring system. The sequence is that of Chorismate synthase from Desulforamulus reducens (strain ATCC BAA-1160 / DSM 100696 / MI-1) (Desulfotomaculum reducens).